The sequence spans 135 residues: Holo-[acyl-carrier-protein] synthase (135 aa).

Positions 8 and 58 each coordinate Mg(2+).

Belongs to the P-Pant transferase superfamily. AcpS family. Requires Mg(2+) as cofactor.

It is found in the cytoplasm. It carries out the reaction apo-[ACP] + CoA = holo-[ACP] + adenosine 3',5'-bisphosphate + H(+). In terms of biological role, transfers the 4'-phosphopantetheine moiety from coenzyme A to a Ser of acyl-carrier-protein. The sequence is that of Holo-[acyl-carrier-protein] synthase from Ligilactobacillus salivarius (strain UCC118) (Lactobacillus salivarius).